A 279-amino-acid chain; its full sequence is Very long chain fatty acid elongase 1 (279 aa).

Met1 is subject to N-acetylmethionine. A run of 7 helical transmembrane segments spans residues 23-43, 61-81, 110-130, 137-154, 176-196, 203-223, and 231-251; these read PLMGSPLLITSILLTYVYFIL, FMIVYNFSLVILSLYIVYEFL, VAWLFMLSKVIELMDTVIFIL, VTFLHVFHHSVLPWSWWW, VVMYLYYGLSALGPVAQPYLW, AIQLIQFVLVSLHISQYYFMP, and IIIHLIWMYGTIFFILFSNFW. A Di-lysine motif motif is present at residues 275–279; sequence KVKAN.

This sequence belongs to the ELO family. ELOVL1 subfamily. Interacts with LASS2, TECR and HSD17B12. Interacts with TECR. Expressed in a broad variety of tissues. Highly expressed in stomach, lung, kidney, skin and intestine. Moderately expressed in white adipose tissue, liver, spleen, brain, brown adipose tissue, heart and muscle. Weakly expressed in testis.

The protein localises to the endoplasmic reticulum membrane. It carries out the reaction a very-long-chain acyl-CoA + malonyl-CoA + H(+) = a very-long-chain 3-oxoacyl-CoA + CO2 + CoA. The catalysed reaction is eicosanoyl-CoA + malonyl-CoA + H(+) = 3-oxodocosanoyl-CoA + CO2 + CoA. It catalyses the reaction docosanoyl-CoA + malonyl-CoA + H(+) = 3-oxotetracosanoyl-CoA + CO2 + CoA. The enzyme catalyses tetracosanoyl-CoA + malonyl-CoA + H(+) = 3-oxohexacosanoyl-CoA + CO2 + CoA. It carries out the reaction (11Z)-eicosenoyl-CoA + malonyl-CoA + H(+) = 3-oxo-(13Z)-docosenoyl-CoA + CO2 + CoA. The catalysed reaction is (13Z)-docosenoyl-CoA + malonyl-CoA + H(+) = 3-oxo-(15Z)-tetracosenoyl-CoA + CO2 + CoA. The protein operates within lipid metabolism; fatty acid biosynthesis. Functionally, catalyzes the first and rate-limiting reaction of the four reactions that constitute the long-chain fatty acids elongation cycle. This endoplasmic reticulum-bound enzymatic process allows the addition of 2 carbons to the chain of long- and very long-chain fatty acids (VLCFAs) per cycle. Condensing enzyme that exhibits activity toward saturated and monounsaturated acyl-CoA substrates, with the highest activity towards C22:0 acyl-CoA. May participate in the production of both saturated and monounsaturated VLCFAs of different chain lengths that are involved in multiple biological processes as precursors of membrane lipids and lipid mediators. Important for saturated C24:0 and monounsaturated C24:1 sphingolipid synthesis. Indirectly inhibits RPE65 via production of VLCFAs. The chain is Very long chain fatty acid elongase 1 from Mus musculus (Mouse).